Reading from the N-terminus, the 380-residue chain is 3-methylitaconate isomerase (380 aa).

It belongs to the PrpF family. As to quaternary structure, homotetramer.

It catalyses the reaction 2-methylene-3-methylsuccinate = dimethylmaleate. It functions in the pathway cofactor degradation; nicotinate degradation; propanoate and pyruvate from 6-hydroxynicotinate: step 6/8. Inhibited by oxidized glutathione, p-chloromercuriphenylsulfonic acid and iodoacetic acid. Not inhibited by the chelating agent alpha,alpha-dipyridyl. Activity is slightly increased by EDTA. Not activated by Fe(2+), Mg(2+), Mn(2+) or Ca(2+). Unaffected by K(+), Na(+), NH4(+), Rb(+) or Li(+). Catalyzes the reversible isomerization of (R)-3-methylitaconate to 2,3-dimethylmaleate. Has very low isomerase activity with itaconate. The polypeptide is 3-methylitaconate isomerase (mii) (Eubacterium barkeri (Clostridium barkeri)).